Here is a 130-residue protein sequence, read N- to C-terminus: DNA-directed RNA polymerase subunit omega (130 aa).

Residues 108-130 (TEEELLKGLEGLAPPEEQPEEDE) form a disordered region.

It belongs to the RNA polymerase subunit omega family. In terms of assembly, the RNAP catalytic core consists of 2 alpha, 1 beta, 1 beta' and 1 omega subunit. When a sigma factor is associated with the core the holoenzyme is formed, which can initiate transcription.

It carries out the reaction RNA(n) + a ribonucleoside 5'-triphosphate = RNA(n+1) + diphosphate. Its function is as follows. Promotes RNA polymerase assembly. Latches the N- and C-terminal regions of the beta' subunit thereby facilitating its interaction with the beta and alpha subunits. This chain is DNA-directed RNA polymerase subunit omega, found in Rhodopseudomonas palustris (strain ATCC BAA-98 / CGA009).